A 183-amino-acid polypeptide reads, in one-letter code: Hypoxanthine/guanine phosphoribosyltransferase (183 aa).

The protein belongs to the purine/pyrimidine phosphoribosyltransferase family. Archaeal HPRT subfamily. In terms of assembly, homodimer.

It localises to the cytoplasm. The catalysed reaction is IMP + diphosphate = hypoxanthine + 5-phospho-alpha-D-ribose 1-diphosphate. The enzyme catalyses GMP + diphosphate = guanine + 5-phospho-alpha-D-ribose 1-diphosphate. It participates in purine metabolism; IMP biosynthesis via salvage pathway; IMP from hypoxanthine: step 1/1. Its function is as follows. Catalyzes a salvage reaction resulting in the formation of IMP that is energically less costly than de novo synthesis. This chain is Hypoxanthine/guanine phosphoribosyltransferase, found in Methanocaldococcus jannaschii (strain ATCC 43067 / DSM 2661 / JAL-1 / JCM 10045 / NBRC 100440) (Methanococcus jannaschii).